The primary structure comprises 368 residues: RAB6-interacting golgin (368 aa).

Disordered stretches follow at residues 1 to 43 (MAQD…REKA), 55 to 133 (DGSA…DCKV), and 302 to 368 (KQMA…AVAT). Residues 11 to 27 (EELRRLKQNKDPFEPQR) are compositionally biased toward basic and acidic residues. The segment covering 80–89 (SPSPVAPSPL) has biased composition (pro residues). A compositionally biased stretch (basic and acidic residues) spans 114-133 (NSHHGHKSAEVRAPKPDCKV). Residues 145-310 (RWEVLQQEQR…AKQMASVERL (166 aa)) are a coiled coil. Residues 188 to 368 (IQKELQALDD…AKNFSAAVAT (181 aa)) are necessary for interaction with RCHY1.

It belongs to the GORAB family. As to quaternary structure, interacts with RCHY1. Interacts with SCYL1 and RAB6A/RAB6. In terms of tissue distribution, expressed in small intestine, kidney, skeletal muscle, lung, spleen, brain and heart. High expression is observed in osteoblasts and skin; also expressed in osteoclasts albeit at lower levels.

It is found in the cytoplasm. The protein localises to the golgi apparatus. The protein is RAB6-interacting golgin (Gorab) of Mus musculus (Mouse).